The following is a 200-amino-acid chain: Small ribosomal subunit protein uS4 (200 aa).

The interval Thr-22–Lys-43 is disordered. The S4 RNA-binding domain maps to Ser-92–Lys-152.

This sequence belongs to the universal ribosomal protein uS4 family. In terms of assembly, part of the 30S ribosomal subunit. Contacts protein S5. The interaction surface between S4 and S5 is involved in control of translational fidelity.

Its function is as follows. One of the primary rRNA binding proteins, it binds directly to 16S rRNA where it nucleates assembly of the body of the 30S subunit. Functionally, with S5 and S12 plays an important role in translational accuracy. In Geobacillus sp. (strain WCH70), this protein is Small ribosomal subunit protein uS4.